Here is a 537-residue protein sequence, read N- to C-terminus: Putative cysteine ligase BshC (537 aa).

Residues 383–451 (MERTQKLLKQ…EVKENQDNFN (69 aa)) are a coiled coil.

This sequence belongs to the BshC family.

Involved in bacillithiol (BSH) biosynthesis. May catalyze the last step of the pathway, the addition of cysteine to glucosamine malate (GlcN-Mal) to generate BSH. The chain is Putative cysteine ligase BshC from Staphylococcus haemolyticus (strain JCSC1435).